We begin with the raw amino-acid sequence, 265 residues long: NAD kinase 1 (265 aa).

The active-site Proton acceptor is the D45. Residues 45 to 46, 122 to 123, R148, D150, and A185 contribute to the NAD(+) site; these read DG and NE.

Belongs to the NAD kinase family. Requires a divalent metal cation as cofactor.

Its subcellular location is the cytoplasm. It catalyses the reaction NAD(+) + ATP = ADP + NADP(+) + H(+). Functionally, involved in the regulation of the intracellular balance of NAD and NADP, and is a key enzyme in the biosynthesis of NADP. Catalyzes specifically the phosphorylation on 2'-hydroxyl of the adenosine moiety of NAD to yield NADP. The protein is NAD kinase 1 of Bacillus cereus (strain ATCC 10987 / NRS 248).